A 508-amino-acid chain; its full sequence is Steroid 17-alpha-hydroxylase/17,20 lyase (508 aa).

Asn202 provides a ligand contact to substrate. Cys442 is a binding site for heme.

It belongs to the cytochrome P450 family. Requires heme as cofactor. In terms of processing, phosphorylation is necessary for 17,20-lyase, but not for 17-alpha-hydroxylase activity.

The protein resides in the endoplasmic reticulum membrane. The protein localises to the microsome membrane. It catalyses the reaction a C21-steroid + reduced [NADPH--hemoprotein reductase] + O2 = a 17alpha-hydroxy-C21-steroid + oxidized [NADPH--hemoprotein reductase] + H2O + H(+). The enzyme catalyses progesterone + reduced [NADPH--hemoprotein reductase] + O2 = 17alpha-hydroxyprogesterone + oxidized [NADPH--hemoprotein reductase] + H2O + H(+). The catalysed reaction is pregnenolone + reduced [NADPH--hemoprotein reductase] + O2 = 17alpha-hydroxypregnenolone + oxidized [NADPH--hemoprotein reductase] + H2O + H(+). It carries out the reaction 17alpha-hydroxyprogesterone + reduced [NADPH--hemoprotein reductase] + O2 = androst-4-ene-3,17-dione + acetate + oxidized [NADPH--hemoprotein reductase] + H2O + 2 H(+). It catalyses the reaction 17alpha-hydroxyprogesterone + reduced [NADPH--hemoprotein reductase] + O2 = 16alpha,17alpha-dihydroxyprogesterone + oxidized [NADPH--hemoprotein reductase] + H2O + H(+). The enzyme catalyses 16alpha,17alpha-dihydroxyprogesterone + reduced [NADPH--hemoprotein reductase] + O2 = 6beta,16alpha,17alpha-trihydroxyprogesterone + oxidized [NADPH--hemoprotein reductase] + H2O + H(+). The catalysed reaction is 17alpha-hydroxypregnenolone + reduced [NADPH--hemoprotein reductase] + O2 = 3beta-hydroxyandrost-5-en-17-one + acetate + oxidized [NADPH--hemoprotein reductase] + H2O + 2 H(+). It carries out the reaction 16alpha,17alpha-dihydroxypregnenolone + reduced [NADPH--hemoprotein reductase] + O2 = 3beta,16alpha-dihydroxy-androst-5-en-17-one + acetate + oxidized [NADPH--hemoprotein reductase] + H2O + 2 H(+). It catalyses the reaction 3beta-hydroxyandrost-5-en-17-one + reduced [NADPH--hemoprotein reductase] + O2 = 3beta,16alpha-dihydroxy-androst-5-en-17-one + oxidized [NADPH--hemoprotein reductase] + H2O + H(+). The enzyme catalyses androst-4-ene-3,17-dione + reduced [NADPH--hemoprotein reductase] + O2 = 16alpha-hydroxyandrost-4-ene-3,17-dione + oxidized [NADPH--hemoprotein reductase] + H2O + H(+). It functions in the pathway steroid hormone biosynthesis. The protein operates within steroid biosynthesis; glucocorticoid biosynthesis. Its activity is regulated as follows. Regulated predominantly by intracellular cAMP levels. The 17,20-lyase activity is stimulated by cytochrome b5, which acts as an allosteric effector increasing the Vmax of the lyase activity. Functionally, a cytochrome P450 monooxygenase involved in corticoid and androgen biosynthesis. Catalyzes 17-alpha hydroxylation of C21 steroids, which is common for both pathways. A second oxidative step, required only for androgen synthesis, involves an acyl-carbon cleavage. The 17-alpha hydroxy intermediates, as part of adrenal glucocorticoids biosynthesis pathway, are precursors of cortisol. Hydroxylates steroid hormones, pregnenolone and progesterone to form 17-alpha hydroxy metabolites, followed by the cleavage of the C17-C20 bond to form C19 steroids, dehydroepiandrosterone (DHEA) and androstenedione. Has 16-alpha hydroxylase activity. Catalyzes 16-alpha hydroxylation of 17-alpha hydroxy pregnenolone, followed by the cleavage of the C17-C20 bond to form 16-alpha-hydroxy DHEA. Also 16-alpha hydroxylates androgens, relevant for estriol synthesis. Mechanistically, uses molecular oxygen inserting one oxygen atom into a substrate, and reducing the second into a water molecule, with two electrons provided by NADPH via cytochrome P450 reductase (CPR; NADPH-ferrihemoprotein reductase). The chain is Steroid 17-alpha-hydroxylase/17,20 lyase from Homo sapiens (Human).